The chain runs to 409 residues: uncharacterized protein (409 aa).

3 disordered regions span residues 12–32 (ENTE…LHCP), 133–160 (EVST…SREQ), and 194–213 (TVSS…GLST). Positions 134 to 160 (VSTQKSWSSEKNWSGLSQGPGTASREQ) are enriched in polar residues.

This is an uncharacterized protein from Mus musculus (Mouse).